A 780-amino-acid chain; its full sequence is Lethal(3)malignant brain tumor-like protein 3 (780 aa).

Residues 1-64 (MTESASSTSG…VKKATATTTW (64 aa)) form an interaction with RBPJ. Required for transcription repressor activity on Notch target genes region. Residues 149-220 (DKDQKEERDV…RKRRGDSAVL (72 aa)) form a disordered region. 2 stretches are compositionally biased toward acidic residues: residues 157 to 166 (DVEEDNEEED) and 185 to 194 (EDGEERDDEM). MBT repeat units follow at residues 232 to 332 (WCWA…LHPP), 340 to 439 (FNWQ…LITP), and 448 to 543 (FSWD…LQPP). The CCHHC-type; degenerate zinc-finger motif lies at 549-593 (LMEASEHGGCSTPGCKGIGHFKRARHLGPHSAANCPYSEINLNKD). Residues 597 to 665 (PDRLSGEMPP…GAREEPTVQQ (69 aa)) are disordered. The segment at 600-710 (LSGEMPPASP…PASKVSKWST (111 aa)) is interaction with DCAF5. A Phosphoserine modification is found at serine 608. Lysine 637 participates in a covalent cross-link: Glycyl lysine isopeptide (Lys-Gly) (interchain with G-Cter in SUMO2). Basic and acidic residues predominate over residues 643–661 (RTESEMRTSHEARGAREEP). Lysine 704 participates in a covalent cross-link: Glycyl lysine isopeptide (Lys-Gly) (interchain with G-Cter in SUMO2). An SAM domain is found at 708–772 (WSTDEVSEFI…FNSILMFKAA (65 aa)).

In terms of assembly, interacts with RNF2. Interacts (via SAM domain) with SAMD1 (via SAM domain); the interaction mediates L3MBTL3 binding to chromatin. Interacts with RBPJ; the interaction is required for L3MBTL3 localization to chromatin and is impaired by Notch-derived peptides containing the intracellular domain (NICD). Interacts (via SAM domain) with KDM1A. Interacts with DCAF5. Interacts with DNMT1. Interacts with E2F1. Interacts with SOX2. Interacts with SFMBT1.

It localises to the nucleus. Its function is as follows. Is a negative regulator of Notch target genes expression, required for RBPJ-mediated transcriptional repression. It recruits KDM1A to Notch-responsive elements and promotes KDM1A-mediated H3K4me demethylation. Involved in the regulation of ubiquitin-dependent degradation of a set of methylated non-histone proteins, including SOX2, DNMT1 and E2F1. It acts as an adapter recruiting the CRL4-DCAF5 E3 ubiquitin ligase complex to methylated target proteins. Required for normal maturation of myeloid progenitor cells. This chain is Lethal(3)malignant brain tumor-like protein 3, found in Homo sapiens (Human).